Here is a 190-residue protein sequence, read N- to C-terminus: Xanthine phosphoribosyltransferase (190 aa).

Xanthine-binding residues include leucine 20 and asparagine 27. A 5-phospho-alpha-D-ribose 1-diphosphate-binding site is contributed by 128 to 132; it reads ANGQA. A xanthine-binding site is contributed by lysine 156.

This sequence belongs to the purine/pyrimidine phosphoribosyltransferase family. Xpt subfamily. Homodimer.

It localises to the cytoplasm. It catalyses the reaction XMP + diphosphate = xanthine + 5-phospho-alpha-D-ribose 1-diphosphate. The protein operates within purine metabolism; XMP biosynthesis via salvage pathway; XMP from xanthine: step 1/1. Functionally, converts the preformed base xanthine, a product of nucleic acid breakdown, to xanthosine 5'-monophosphate (XMP), so it can be reused for RNA or DNA synthesis. The sequence is that of Xanthine phosphoribosyltransferase from Pediococcus pentosaceus (strain ATCC 25745 / CCUG 21536 / LMG 10740 / 183-1w).